The primary structure comprises 737 residues: Zinc finger protein 585A (737 aa).

One can recognise a KRAB domain in the interval 1–65; sequence MAAPTREEWR…QGERPRQSCP (65 aa). 6 C2H2-type zinc fingers span residues 126 to 148, 154 to 176, 182 to 204, 210 to 232, 238 to 260, and 266 to 288; these read YVCI…QKTH, FKCN…QRIH, YECS…EKIH, HECT…QKIH, YICI…RRIH, and YECS…QRVH. Residues 294–316 form a C2H2-type 7; degenerate zinc finger; it reads YICTEYGKVFSNNSNLITHKKVQ. C2H2-type zinc fingers lie at residues 322-344, 350-372, 378-400, 406-428, 434-456, 462-484, 490-512, 518-540, 546-568, 574-596, 602-624, 630-652, 658-680, 686-708, and 714-736; these read SICT…QRIH, YACS…QRIH, YICM…QIIH, YKCG…KRIH, YMCN…QKTH, YICS…QRIH, YECS…QKIH, YECH…QKIH, YVCT…QRIH, YECS…QPLH, YVCA…QKTH, YICS…HRIH, YECS…QRIH, YVCA…QTTH, and YKCG…QSNH.

This sequence belongs to the krueppel C2H2-type zinc-finger protein family.

It localises to the nucleus. May be involved in transcriptional regulation. This is Zinc finger protein 585A (ZNF585A) from Pongo abelii (Sumatran orangutan).